Reading from the N-terminus, the 709-residue chain is Solute carrier family 15 member 1 (709 aa).

Residues 1–21 (MGMSKSRGCFGYPLSIFFIVV) form a helical membrane-spanning segment. Residues 22 to 53 (NEFCERFSYYGMRALLVLYFRNFLGWDDNLST) are Extracellular-facing. A glycan (N-linked (GlcNAc...) asparagine) is linked at Asn-50. The chain crosses the membrane as a helical span at residues 54-74 (AIYHTFVALCYLTPILGALIA). At 75 to 82 (DSWLGKFK) the chain is on the cytoplasmic side. A helical membrane pass occupies residues 83 to 103 (TIVSLSIVYTIGQAVISVSSI). Topologically, residues 104–118 (NDLTDHDHNGSPDSL) are extracellular. Residues 119–139 (PVHVALSMVGLALIALGTGGI) form a helical membrane-spanning segment. The Cytoplasmic portion of the chain corresponds to 140-161 (KPCVSAFGGDQFEEGQEKQRNR). The helical transmembrane segment at 162–182 (FFSIFYLAINGGSLLSTIITP) threads the bilayer. Residues 183 to 198 (ILRVQQCGIHSQQACY) are Extracellular-facing. The helical transmembrane segment at 199 to 219 (PLAFGVPAALMAVALIVFVLG) threads the bilayer. Residues 220–276 (SGMYKKFQPQGNIMGKVAKCIGFAIKNRFRHRSKAYPKREHWLDWAKEKYDERLISQ) are Cytoplasmic-facing. A helical membrane pass occupies residues 277-297 (IKMVTKVMFLYIPLPMFWALF). The Extracellular portion of the chain corresponds to 298–327 (DQQGSRWTLQATTMNGKIGAIEIQPDQMQT). Residues 328 to 348 (VNAILIVIMVPIVDAVVYPLI) traverse the membrane as a helical segment. Topologically, residues 349 to 361 (AKCGFNFTSLKKM) are cytoplasmic. The chain crosses the membrane as a helical span at residues 362–382 (TVGMFLASMAFVVAAIVQVEI). At 383–585 (DKTLPVFPGG…PPNTVNMALQ (203 aa)) the chain is on the extracellular side. Positions 383–585 (DKTLPVFPGG…PPNTVNMALQ (203 aa)) are extracellular domain (ECD). N-linked (GlcNAc...) asparagine glycosylation is found at Asn-406, Asn-439, Asn-515, and Asn-532. Residues 586-606 (IPQYFLLTCGEVVFSVTGLEF) traverse the membrane as a helical segment. The Cytoplasmic segment spans residues 607–620 (SYSQAPSNMKSVLQ). Residues 621 to 641 (AGWLLTVAVGNIIVLIVAGAG) traverse the membrane as a helical segment. The Extracellular portion of the chain corresponds to 642-646 (HFPKQ). A helical membrane pass occupies residues 647–667 (WAEYILFASLLLVVCVIFAIM). Over 668–709 (ARFYTYINPAEIEAQFDEDEKKKGIGKENPYSSLEPVSQTNM) the chain is Cytoplasmic. Residues 690 to 709 (KGIGKENPYSSLEPVSQTNM) are disordered. A compositionally biased stretch (polar residues) spans 697–709 (PYSSLEPVSQTNM).

This sequence belongs to the major facilitator superfamily. Proton-dependent oligopeptide transporter (POT/PTR) (TC 2.A.17) family. As to quaternary structure, interacts (via extracellular domain region) with trypsin.

It is found in the apical cell membrane. It carries out the reaction a dipeptide(out) + H(+)(out) = a dipeptide(in) + H(+)(in). The enzyme catalyses an L-amino acid tripeptide(out) + H(+)(out) = an L-amino acid tripeptide(in) + H(+)(in). It catalyses the reaction L-alanyl-L-lysine(out) + H(+)(out) = L-alanyl-L-lysine(in) + H(+)(in). The catalysed reaction is L-alanyl-L-proline(out) + H(+)(out) = L-alanyl-L-proline(in) + H(+)(in). It carries out the reaction L-alanyl-L-valine(out) + H(+)(out) = L-alanyl-L-valine(in) + H(+)(in). The enzyme catalyses carnosine(out) + H(+)(out) = carnosine(in) + H(+)(in). It catalyses the reaction glycyl-L-glutamine(out) + H(+)(out) = glycyl-L-glutamine(in) + H(+)(in). The catalysed reaction is glycyl-L-leucine(out) + H(+)(out) = glycyl-L-leucine(in) + H(+)(in). It carries out the reaction glycyl-L-proline(out) + H(+)(out) = glycyl-L-proline(in) + H(+)(in). The enzyme catalyses glycyl-sarcosine(out) + H(+)(out) = glycyl-sarcosine(in) + H(+)(in). It catalyses the reaction L-leucyl-L-leucine(out) + H(+)(out) = L-leucyl-L-leucine(in) + H(+)(in). The catalysed reaction is L-leucyl-L-proline(out) + H(+)(out) = L-leucyl-L-proline(in) + H(+)(in). It carries out the reaction L-phenylalanyl-L-leucine(out) + H(+)(out) = L-phenylalanyl-L-leucine(in) + H(+)(in). The enzyme catalyses L-phenylalanyl-L-phenylalanine(out) + H(+)(out) = L-phenylalanyl-L-phenylalanine(in) + H(+)(in). It catalyses the reaction L-lysyl-glycine(out) + H(+)(out) = L-lysyl-glycine(in) + H(+)(in). The catalysed reaction is L-tyrosylglycine(out) + H(+)(out) = L-tyrosylglycine(in) + H(+)(in). It carries out the reaction L-alanyl-L-aspartate(out) + 2 H(+)(out) = L-alanyl-L-aspartate(in) + 2 H(+)(in). The enzyme catalyses L-aspartyl-glycine(out) + 2 H(+)(out) = L-aspartyl-glycine(in) + 2 H(+)(in). It catalyses the reaction glycyl-L-aspartate(out) + 2 H(+)(out) = glycyl-L-aspartate(in) + 2 H(+)(in). The catalysed reaction is glycyl-L-glutamate(out) + 2 H(+)(out) = glycyl-L-glutamate(in) + 2 H(+)(in). It carries out the reaction L-alanyl-L-leucyl-L-alanine(out) + H(+)(out) = L-alanyl-L-leucyl-L-alanine(in) + H(+)(in). The enzyme catalyses L-alanyl-L-prolylglycine(out) + H(+)(out) = L-alanyl-L-prolylglycine(in) + H(+)(in). It catalyses the reaction glycylglycyl-L-isoleucine(out) + H(+)(out) = glycylglycyl-L-isoleucine(in) + H(+)(in). The catalysed reaction is glycylglycyl-L-proline(out) + H(+)(out) = glycylglycyl-L-proline(in) + H(+)(in). It carries out the reaction L-methionyl-L-phenylalanyl-L-methionine(out) + H(+)(out) = L-methionyl-L-phenylalanyl-L-methionine(in) + H(+)(in). The enzyme catalyses N-acetyl-D-muramoyl-L-alanyl-D-isoglutamine(out) + 2 H(+)(out) = N-acetyl-D-muramoyl-L-alanyl-D-isoglutamine(in) + 2 H(+)(in). It catalyses the reaction N(alpha)-formyl-L-methionyl-L-leucyl-L-phenylalanine(out) + 2 H(+)(out) = N(alpha)-formyl-L-methionyl-L-leucyl-L-phenylalanine(in) + 2 H(+)(in). In terms of biological role, electrogenic proton-coupled amino-acid transporter that transports oligopeptides of 2 to 4 amino acids with a preference for dipeptides. Transports neutral and monovalently charged peptides with a proton to peptide stoichiometry of 1:1 or 2:1. Primarily responsible for the absorption of dietary di- and tripeptides from the small intestinal lumen. Mediates transepithelial transport of muramyl and N-formylated bacterial dipeptides contributing to recognition of pathogenic bacteria by the mucosal immune system. In Mus musculus (Mouse), this protein is Solute carrier family 15 member 1.